Reading from the N-terminus, the 557-residue chain is Hepatocyte nuclear factor 1-beta (557 aa).

The interval Met-1 to Glu-31 is dimerization. Residues Met-1–Glu-32 enclose the HNF-p1 domain. Phosphoserine is present on residues Ser-49, Ser-52, Ser-75, and Ser-80. Residues Thr-64–Asp-85 form a disordered region. The POU-specific atypical domain occupies Lys-93 to Gln-188. A DNA-binding region (homeobox; HNF1-type) is located at residues Met-231–Gln-311. The disordered stretch occupies residues His-324–Tyr-352. The span at Pro-328–Pro-344 shows a compositional bias: low complexity.

Belongs to the HNF1 homeobox family. Binds DNA as a dimer. Can form homodimer or heterodimer with HNF1-alpha. Interacts (via HNF-p1 domain) with PCBD1; the interaction increases its transactivation activity.

It is found in the nucleus. Transcription factor that binds to the inverted palindrome 5'-GTTAATNATTAAC-3'. Binds to the FPC element in the cAMP regulatory unit of the PLAU gene. Transcriptional activity is increased by coactivator PCBD1. This is Hepatocyte nuclear factor 1-beta (HNF1B) from Homo sapiens (Human).